The primary structure comprises 869 residues: H(+)/Cl(-) exchange transporter 6 (869 aa).

Topologically, residues 1–80 are cytoplasmic; it reads MAGCRGSLCC…KKGRRYEAVK (80 aa). A run of 2 helical transmembrane segments spans residues 81-113 and 128-150; these read WMVVFAIGVCTGLVGLFVDFFVRLFTQLKFGVV and LSLLELLGFNLTFVFLASLLVLI. A Selectivity filter part_1 motif is present at residues 156–160; that stretch reads GSGIP. Position 157 (serine 157) interacts with chloride. The segment at residues 159–166 is an intramembrane region (helical); it reads IPEVKCYL. Transmembrane regions (helical) follow at residues 176-194 and 200-217; these read RLRTLLCKVLGVLFSVAGG and EGPMIHSGSVVGAGLPQF. The short motif at 198-202 is the Selectivity filter part_2 element; the sequence is EKEGP. 2 intramembrane regions (helical) span residues 241 to 253 and 257 to 265; these read FVSAGAAAGVAAA and PIGGTLFSL. Transmembrane regions (helical) follow at residues 277-294, 335-364, and 371-392; these read TWKVLFCSMSATFTLNFF, GFFVVMGVIGGLLGATFNCLNKRLAKYRMR, and KLVRVLESLLVSLVTTVVVFVA. N-linked (GlcNAc...) asparagine glycosylation is found at asparagine 410, asparagine 422, and asparagine 432. The next 2 membrane-spanning stretches (helical) occupy residues 462-481 and 487-511; these read PVTLALFFVLYFLLACWTYG and GLFVPSLLCGAAFGRLVANVLKSYI. The Selectivity filter part_3 signature appears at 487-491; sequence GLFVP. Phenylalanine 489 provides a ligand contact to chloride. The helical intramembrane region spans 519 to 533; the sequence is GTFALIGAAAFLGGV. Residues 534–536 constitute an intramembrane region (note=Loop between two helices); the sequence is VRM. Residues 537 to 548 constitute an intramembrane region (helical); the sequence is TISLTVILIEST. Residues 549–552 constitute an intramembrane region (note=Loop between two helices); that stretch reads NEIT. The helical transmembrane segment at 553-571 threads the bilayer; sequence YGLPIMVTLMVAKWTGDFF. Topologically, residues 572-869 are cytoplasmic; sequence NKGIYDIHVG…ARLRQHYQTI (298 aa). Tyrosine 576 is a chloride binding site. In terms of domain architecture, CBS 1 spans 605–662; sequence MEPNLTYVYPHTRIQSLVSILRTTVHHAFPVVTENRGNEKEFMKGNQLISNNIKFKKS. 630-632 serves as a coordination point for ATP; it reads HHA. At serine 773 the chain carries Phosphoserine. Positions 807–868 constitute a CBS 2 domain; sequence MNPSPFTVSP…QARLRQHYQT (62 aa). Residue 849–852 participates in ATP binding; sequence TRHN.

It belongs to the chloride channel (TC 2.A.49) family. ClC-6/CLCN6 subfamily. N-glycosylated on several asparagine residues. In terms of tissue distribution, testis, ovary, small intestine, brain and skeletal muscle. Low level expression in aortic and coronary vascular smooth muscle cells, and aortic endothelial cells. Isoform 3 is only detected in kidney.

The protein localises to the late endosome membrane. The catalysed reaction is 2 chloride(in) + H(+)(out) = 2 chloride(out) + H(+)(in). Functionally, voltage-gated channel mediating the exchange of chloride ions against protons. Functions as antiporter and contributes to the acidification of the late endosome lumen. The CLC channel family contains both chloride channels and proton-coupled anion transporters that exchange chloride or another anion for protons. The presence of conserved gating glutamate residues is typical for family members that function as antiporters. In Homo sapiens (Human), this protein is H(+)/Cl(-) exchange transporter 6.